Here is a 400-residue protein sequence, read N- to C-terminus: S-adenosylmethionine synthase (400 aa).

Residue His17 coordinates ATP. Residue Asp19 participates in Mg(2+) binding. Residue Glu45 coordinates K(+). Residues Glu58 and Gln101 each coordinate L-methionine. The flexible loop stretch occupies residues 101 to 111; that stretch reads QSADIAMGVDQ. ATP contacts are provided by residues 177–179, 244–245, Asp253, 259–260, Ala276, and Lys280; these read DGK, RF, and RK. Asp253 lines the L-methionine pocket. An L-methionine-binding site is contributed by Lys284.

Belongs to the AdoMet synthase family. In terms of assembly, homotetramer; dimer of dimers. The cofactor is Mg(2+). K(+) is required as a cofactor.

The protein resides in the cytoplasm. It carries out the reaction L-methionine + ATP + H2O = S-adenosyl-L-methionine + phosphate + diphosphate. Its pathway is amino-acid biosynthesis; S-adenosyl-L-methionine biosynthesis; S-adenosyl-L-methionine from L-methionine: step 1/1. In terms of biological role, catalyzes the formation of S-adenosylmethionine (AdoMet) from methionine and ATP. The overall synthetic reaction is composed of two sequential steps, AdoMet formation and the subsequent tripolyphosphate hydrolysis which occurs prior to release of AdoMet from the enzyme. The chain is S-adenosylmethionine synthase from Bacillus subtilis (strain 168).